The sequence spans 295 residues: Manganese transport system membrane protein MntD (295 aa).

9 consecutive transmembrane segments (helical) span residues isoleucine 7–leucine 27, leucine 42–isoleucine 62, glycine 63–valine 83, alanine 87–tyrosine 107, isoleucine 138–serine 158, alanine 174–leucine 194, valine 203–threonine 223, leucine 227–phenylalanine 247, and valine 253–phenylalanine 273.

This sequence belongs to the ABC-3 integral membrane protein family. As to quaternary structure, the complex is probably composed of two ATP-binding proteins (MntB), two transmembrane proteins (MntC and MntD) and a solute-binding protein (MntA).

It is found in the cell membrane. Probably part of the ABC transporter complex MntABCD involved in manganese import. Probably responsible for the translocation of the substrate across the membrane. This is Manganese transport system membrane protein MntD from Bacillus subtilis (strain 168).